The chain runs to 247 residues: Carboxy-S-adenosyl-L-methionine synthase (247 aa).

Residues Tyr39, 64 to 66, 89 to 90, 117 to 118, Asn132, and Arg199 each bind S-adenosyl-L-methionine; these read GCS, DN, and DI.

The protein belongs to the class I-like SAM-binding methyltransferase superfamily. Cx-SAM synthase family. Homodimer.

It catalyses the reaction prephenate + S-adenosyl-L-methionine = carboxy-S-adenosyl-L-methionine + 3-phenylpyruvate + H2O. Its function is as follows. Catalyzes the conversion of S-adenosyl-L-methionine (SAM) to carboxy-S-adenosyl-L-methionine (Cx-SAM). The chain is Carboxy-S-adenosyl-L-methionine synthase from Escherichia fergusonii (strain ATCC 35469 / DSM 13698 / CCUG 18766 / IAM 14443 / JCM 21226 / LMG 7866 / NBRC 102419 / NCTC 12128 / CDC 0568-73).